Reading from the N-terminus, the 697-residue chain is Putative cryptochrome DASH (697 aa).

Positions 5–164 (KLLVYLLRRD…GFKLWHDEKY (160 aa)) constitute a Photolyase/cryptochrome alpha/beta domain. 2 disordered regions span residues 170-215 (DNGL…FPSW) and 554-697 (FSVT…PPHI). Positions 188 to 198 (KTQEPLRERPR) are enriched in basic and acidic residues. The span at 560–569 (RGNRRPYRWR) shows a compositional bias: basic residues. The segment covering 578 to 590 (GRGGRGGGTGNTS) has biased composition (gly residues). 2 stretches are compositionally biased toward low complexity: residues 659 to 675 (QQQQ…YAHQ) and 683 to 697 (RQQQ…PPHI).

It belongs to the DNA photolyase class-1 family. The cofactor is FAD. (6R)-5,10-methylene-5,6,7,8-tetrahydrofolate is required as a cofactor.

Its function is as follows. May have a photoreceptor function. This Gibberella zeae (strain ATCC MYA-4620 / CBS 123657 / FGSC 9075 / NRRL 31084 / PH-1) (Wheat head blight fungus) protein is Putative cryptochrome DASH.